The primary structure comprises 542 residues: Monocarboxylate transporter 3 (542 aa).

At 1–19 the chain is on the cytoplasmic side; it reads MGRADPEEGQLPAPVKPPD. Residues 20–40 traverse the membrane as a helical segment; that stretch reads GGWGWIVLFGCFVITGFSYAF. Topologically, residues 41–63 are extracellular; that stretch reads PKAVSVYFKELMKDFHVGYSDTA. A helical transmembrane segment spans residues 64-84; that stretch reads WISSIMLAMLYGTGPVCSIMV. The Cytoplasmic portion of the chain corresponds to 85 to 93; it reads NQFGCRPVM. The helical transmembrane segment at 94-114 threads the bilayer; sequence LIGGLLASSGMILASFTTNII. At 115–119 the chain is on the extracellular side; that stretch reads ELYLT. Residues 120–140 traverse the membrane as a helical segment; the sequence is AGVLTGLGMALNFQPSLIMLG. The Cytoplasmic portion of the chain corresponds to 141 to 152; it reads TYFDKRRPLANG. A helical transmembrane segment spans residues 153 to 173; that stretch reads LAAAGSPVFLSSLSPLGQVLL. Over 174–181 the chain is Extracellular; sequence EKFGWRGG. A helical membrane pass occupies residues 182 to 202; sequence FLIMGGLLLNCCTCGAVMRPL. Residues 203-265 are Cytoplasmic-facing; sequence DAGMKRKTEK…LDFSIFSNRG (63 aa). Residues 226–247 are disordered; that stretch reads GGKSEEGISTTDGTKKTKKAKK. The helical transmembrane segment at 266-286 threads the bilayer; it reads FIIYTISKFILVLGLFVPPIL. At 287–301 the chain is on the extracellular side; sequence LVNYAKDTGVPDTEA. The helical transmembrane segment at 302-322 threads the bilayer; that stretch reads AFLLSIIGFIDIFARPACGMV. At 323–330 the chain is on the cytoplasmic side; that stretch reads AGLKWVRP. Residues 331 to 351 form a helical membrane-spanning segment; that stretch reads HVAYLFSFAMLFNGLTDICSA. Topologically, residues 352 to 357 are extracellular; it reads RASNYT. Residues 358–378 traverse the membrane as a helical segment; the sequence is GLVIFCVFFGISYGMVGALQF. Residues 379–392 are Cytoplasmic-facing; it reads EVLMAIVGSQKFSS. Residues 393-413 traverse the membrane as a helical segment; that stretch reads AIGLVLLIEAFAVLIGPPSAG. At 414-423 the chain is on the extracellular side; that stretch reads RLVDALKNYE. A helical transmembrane segment spans residues 424 to 444; that stretch reads VIFYLAGSEVVLSALFLAMAT. Residues 445–542 are Cytoplasmic-facing; it reads YCCLNRGKKT…ADQTVERDSF (98 aa). The disordered stretch occupies residues 453–542; it reads KTPPPEKNPS…ADQTVERDSF (90 aa). 2 basolateral sorting signal regions span residues 465 to 510 and 511 to 532; these read GGSD…VEDE and QSGEGGRCPEADGEVSSRAGCN. A compositionally biased stretch (acidic residues) spans 468–478; it reads DTEEAESDVQE.

The protein belongs to the major facilitator superfamily. Monocarboxylate porter (TC 2.A.1.13) family. As to expression, retinal pigment epithelium.

It localises to the basolateral cell membrane. It catalyses the reaction (S)-lactate(in) + H(+)(in) = (S)-lactate(out) + H(+)(out). Functionally, probable retinal pigment epithelium (RPE)-specific proton-coupled L-lactate transporter. May facilitate transport of lactate and H(+) out of the retina and could therefore play a role in pH and ion homeostasis of the outer retina. The chain is Monocarboxylate transporter 3 (SLC16A8) from Gallus gallus (Chicken).